The following is a 201-amino-acid chain: Small ribosomal subunit protein uS4 (201 aa).

Residues Leu-19–Ile-41 form a disordered region. The S4 RNA-binding domain maps to Ser-91 to Ala-157.

It belongs to the universal ribosomal protein uS4 family. As to quaternary structure, part of the 30S ribosomal subunit. Contacts protein S5. The interaction surface between S4 and S5 is involved in control of translational fidelity.

In terms of biological role, one of the primary rRNA binding proteins, it binds directly to 16S rRNA where it nucleates assembly of the body of the 30S subunit. Functionally, with S5 and S12 plays an important role in translational accuracy. The chain is Small ribosomal subunit protein uS4 from Mycobacteroides abscessus (strain ATCC 19977 / DSM 44196 / CCUG 20993 / CIP 104536 / JCM 13569 / NCTC 13031 / TMC 1543 / L948) (Mycobacterium abscessus).